The following is a 181-amino-acid chain: Large ribosomal subunit protein uL5 (181 aa).

Belongs to the universal ribosomal protein uL5 family. In terms of assembly, part of the 50S ribosomal subunit; part of the 5S rRNA/L5/L18/L25 subcomplex. Contacts the 5S rRNA and the P site tRNA. Forms a bridge to the 30S subunit in the 70S ribosome.

This is one of the proteins that bind and probably mediate the attachment of the 5S RNA into the large ribosomal subunit, where it forms part of the central protuberance. In the 70S ribosome it contacts protein S13 of the 30S subunit (bridge B1b), connecting the 2 subunits; this bridge is implicated in subunit movement. Contacts the P site tRNA; the 5S rRNA and some of its associated proteins might help stabilize positioning of ribosome-bound tRNAs. The polypeptide is Large ribosomal subunit protein uL5 (Campylobacter lari (strain RM2100 / D67 / ATCC BAA-1060)).